We begin with the raw amino-acid sequence, 382 residues long: MRALSILGSTGSIGLSTLDVVRQHRDRFTIVGLAEGHDVAALAAQIEEFKPLAVSVRDAESAKKLQELLGAHKPEVYYGLDGAATIAALDGVDMVVSAIVGAAGLRPTVAAIKAGKHIALANKETLVVAGELVSRLVAEHKVHLLPVDSEHSAIFQSLAGHRAEDVERIILTASGGPFRKTSAEELKQVTLEQALKHPQWSMGAKITIDSATLMNKGLEVIEAHWLFNMPAEKIGVVVHPQSIIHSMVEYIDGCVIAQLGAPDMRAPIAYALSWPERCESGIHKLDLAKIATLTFEEPDMERFPALRLAFDALKAGGTYPAVLNAANEIAVAAFLERKIGFLDIAAMVEKTMQAHEAFTPVELEEYLQVDRWARDTAKTFLP.

Positions 10, 11, 12, 13, 36, and 122 each coordinate NADPH. Residue lysine 123 coordinates 1-deoxy-D-xylulose 5-phosphate. Glutamate 124 serves as a coordination point for NADPH. Aspartate 148 is a binding site for Mn(2+). The 1-deoxy-D-xylulose 5-phosphate site is built by serine 149, glutamate 150, serine 174, and histidine 197. Glutamate 150 is a binding site for Mn(2+). Glycine 203 contacts NADPH. 4 residues coordinate 1-deoxy-D-xylulose 5-phosphate: serine 210, asparagine 215, lysine 216, and glutamate 219. Glutamate 219 is a Mn(2+) binding site.

It belongs to the DXR family. Mg(2+) is required as a cofactor. Mn(2+) serves as cofactor.

The enzyme catalyses 2-C-methyl-D-erythritol 4-phosphate + NADP(+) = 1-deoxy-D-xylulose 5-phosphate + NADPH + H(+). The protein operates within isoprenoid biosynthesis; isopentenyl diphosphate biosynthesis via DXP pathway; isopentenyl diphosphate from 1-deoxy-D-xylulose 5-phosphate: step 1/6. In terms of biological role, catalyzes the NADPH-dependent rearrangement and reduction of 1-deoxy-D-xylulose-5-phosphate (DXP) to 2-C-methyl-D-erythritol 4-phosphate (MEP). This Chlorobium chlorochromatii (strain CaD3) protein is 1-deoxy-D-xylulose 5-phosphate reductoisomerase.